Reading from the N-terminus, the 513-residue chain is uncharacterized protein (513 aa).

Positions 1–16 (MPREHDSKYHRERDMR) are enriched in basic and acidic residues. The interval 1 to 21 (MPREHDSKYHRERDMRSGLQE) is disordered.

This is an uncharacterized protein from Sinorhizobium fredii (strain NBRC 101917 / NGR234).